A 382-amino-acid polypeptide reads, in one-letter code: Protein MSN1 (382 aa).

Residues 12 to 26 (LNENEAILTNRVAEL) form a leucine-zipper region. 2 stretches are compositionally biased toward polar residues: residues 104 to 114 (TLDPQGFTDGT) and 122 to 138 (NYTS…HPQN). Disordered regions lie at residues 104-138 (TLDP…HPQN) and 155-260 (NSQE…EEEQ). The span at 162–180 (SQQQTNSSNSISQENNSTN) shows a compositional bias: low complexity. Polar residues-rich tracts occupy residues 181-198 (PSVD…SNLV) and 207-221 (NPPN…GLYI). Over residues 222-231 (SSNSSQSRQS) the composition is skewed to low complexity. The segment covering 232-253 (PNLQKVSPNHENAVESNAQESV) has biased composition (polar residues). A Nuclear localization signal motif is present at residues 266–271 (GLKRKR).

The protein resides in the nucleus. Its function is as follows. May function as a transcriptional activator. Increased dosage of MSN1 restores invertase expression in yeast mutants defective in the SNF1 protein kinase, and msn1 disruption reduced derepression of invertase in the wild-type. May affect SUC2 expression. Expression of MSN1 enhances growth in iron-limiting conditions. The protein is Protein MSN1 (MSN1) of Saccharomyces cerevisiae (strain ATCC 204508 / S288c) (Baker's yeast).